The primary structure comprises 267 residues: Glucosamine-6-phosphate deaminase (267 aa).

Asp72 (proton acceptor; for enolization step) is an active-site residue. Asp141 serves as the catalytic For ring-opening step. The active-site Proton acceptor; for ring-opening step is the His143. Glu148 functions as the For ring-opening step in the catalytic mechanism.

It belongs to the glucosamine/galactosamine-6-phosphate isomerase family. NagB subfamily. Homohexamer.

It catalyses the reaction alpha-D-glucosamine 6-phosphate + H2O = beta-D-fructose 6-phosphate + NH4(+). It participates in amino-sugar metabolism; N-acetylneuraminate degradation; D-fructose 6-phosphate from N-acetylneuraminate: step 5/5. With respect to regulation, allosterically activated by N-acetylglucosamine 6-phosphate (GlcNAc6P). In terms of biological role, catalyzes the reversible isomerization-deamination of glucosamine 6-phosphate (GlcN6P) to form fructose 6-phosphate (Fru6P) and ammonium ion. The protein is Glucosamine-6-phosphate deaminase of Mannheimia succiniciproducens (strain KCTC 0769BP / MBEL55E).